Reading from the N-terminus, the 371-residue chain is DNA replication and repair protein RecF (371 aa).

30–37 contacts ATP; sequence GQNGMGKT.

Belongs to the RecF family.

It localises to the cytoplasm. The RecF protein is involved in DNA metabolism; it is required for DNA replication and normal SOS inducibility. RecF binds preferentially to single-stranded, linear DNA. It also seems to bind ATP. The protein is DNA replication and repair protein RecF of Phocaeicola vulgatus (strain ATCC 8482 / DSM 1447 / JCM 5826 / CCUG 4940 / NBRC 14291 / NCTC 11154) (Bacteroides vulgatus).